The chain runs to 237 residues: Periplasmic deoxyribonuclease (237 aa).

The signal sequence occupies residues 1–27 (MSRPSRVLGLPLLSLGLTLLVSTPLQA).

The protein belongs to the EndA/NucM nuclease family.

Its subcellular location is the periplasm. Its function is as follows. Endonuclease which is capable of degrading plasmid DNA. In Aeromonas hydrophila, this protein is Periplasmic deoxyribonuclease (dnsH).